Here is a 356-residue protein sequence, read N- to C-terminus: N-acyl-phosphatidylethanolamine-hydrolyzing phospholipase D 1 (356 aa).

Zn(2+)-binding residues include His-144 and His-146. Residue Tyr-147 participates in an N-acyl-1,2-diacyl-sn-glycero-3-phosphoethanolamine binding. Zn(2+) is bound by residues Asp-148, His-149, His-217, and Asp-248. His-286 is an an N-acyl-1,2-diacyl-sn-glycero-3-phosphoethanolamine binding site. His-308 lines the Zn(2+) pocket.

The protein belongs to the NAPE-PLD family. Zn(2+) is required as a cofactor. In terms of tissue distribution, expressed in interneurons that are in close proximity to the primary sensory neurons. Predominantly expressed in the pharynx but can also be found in cell bodies of the dorsal and ventral nerve cords.

The catalysed reaction is an N-acyl-1,2-diacyl-sn-glycero-3-phosphoethanolamine + H2O = an N-acylethanolamine + a 1,2-diacyl-sn-glycero-3-phosphate + H(+). The enzyme catalyses 1,2-dihexadecanoyl-sn-glycero-3-phospho-(N-hexadecanoyl)-ethanolamine + H2O = 1,2-dihexadecanoyl-sn-glycero-3-phosphate + N-hexadecanoylethanolamine + H(+). It catalyses the reaction N-(5Z,8Z,11Z,14Z-eicosatetraenoyl)-1,2-di-(9Z-octadecenoyl)-sn-glycero-3-phosphoethanolamine + H2O = N-(5Z,8Z,11Z,14Z-eicosatetraenoyl)-ethanolamine + 1,2-di-(9Z-octadecenoyl)-sn-glycero-3-phosphate + H(+). Its function is as follows. D-type phospholipase that hydrolyzes N-acyl-phosphatidylethanolamines (NAPEs) to produce bioactive N-acylethanolamines/fatty acid ethanolamides (NAEs/FAEs) and phosphatidic acid. NAEs are bioactive lipids that are involved in diverse physiological processes such as growth and lifespan. The chain is N-acyl-phosphatidylethanolamine-hydrolyzing phospholipase D 1 from Caenorhabditis elegans.